The chain runs to 177 residues: Large ribosomal subunit protein uL6 (177 aa).

The protein belongs to the universal ribosomal protein uL6 family. In terms of assembly, part of the 50S ribosomal subunit.

This protein binds to the 23S rRNA, and is important in its secondary structure. It is located near the subunit interface in the base of the L7/L12 stalk, and near the tRNA binding site of the peptidyltransferase center. This chain is Large ribosomal subunit protein uL6, found in Glaesserella parasuis serovar 5 (strain SH0165) (Haemophilus parasuis).